Here is a 557-residue protein sequence, read N- to C-terminus: MARLGLLALLCTLAALSASLLAAELKSKSCSEVRRLYVSKGFNKNDAPLYEINGDHLKICPQDYTCCSQEMEEKYSLQSKDDFKTVVSEQCNHLQAIFASRYKKFDEFFKELLENAEKSLNDMFVKTYGHLYMQNSELFKDLFVELKRYYVAGNVNLEEMLNDFWARLLERMFRLVNSQYHFTDEYLECVSKYTEQLKPFGDVPRKLKLQVTRAFVAARTFAQGLAVARDVVSKVSVVNPTAQCTHALLKMIYCSHCRGLVTVKPCYNYCSNIMRGCLANQGDLDFEWNNFIDAMLMVAERLEGPFNIESVMDPIDVKISDAIMNMQDNSVQVSQKVFQGCGPPKPLPAGRISRSISESAFSARFRPYHPEQRPTTAAGTSLDRLVTDVKEKLKQAKKFWSSLPSTVCNDERMAAGNENEDDCWNGKGKSRYLFAVTGNGLANQGNNPEVQVDTSKPDILILRQIMALRVMTSKMKNAYNGNDVDFFDISDESSGEGSGSGCEYQQCPSEFEYNATDHSGKSANEKADSAGGAHAEAKPYLLAALCILFLAVQGEWR.

The signal sequence occupies residues 1–18; it reads MARLGLLALLCTLAALSA. The residue at position 357 (serine 357) is a Phosphoserine. O-linked (Xyl...) (glycosaminoglycan) serine glycans are attached at residues serine 494, serine 498, and serine 500. Asparagine 514 carries N-linked (GlcNAc...) asparagine glycosylation. The GPI-anchor amidated serine moiety is linked to residue serine 529. Positions 530 to 557 are cleaved as a propeptide — removed in mature form; it reads AGGAHAEAKPYLLAALCILFLAVQGEWR.

This sequence belongs to the glypican family. Highly expressed in developing brain and kidney.

Its subcellular location is the cell membrane. The protein resides in the secreted. It is found in the extracellular space. Its function is as follows. Cell surface proteoglycan that bears heparan sulfate. May be involved in the development of kidney tubules and of the central nervous system. The polypeptide is Glypican-4 (Gpc4) (Mus musculus (Mouse)).